Consider the following 438-residue polypeptide: UDP-N-acetylmuramate--L-alanine ligase (438 aa).

108 to 114 (GAHGKTS) contributes to the ATP binding site.

It belongs to the MurCDEF family.

It is found in the cytoplasm. It catalyses the reaction UDP-N-acetyl-alpha-D-muramate + L-alanine + ATP = UDP-N-acetyl-alpha-D-muramoyl-L-alanine + ADP + phosphate + H(+). Its pathway is cell wall biogenesis; peptidoglycan biosynthesis. Cell wall formation. The sequence is that of UDP-N-acetylmuramate--L-alanine ligase from Oceanobacillus iheyensis (strain DSM 14371 / CIP 107618 / JCM 11309 / KCTC 3954 / HTE831).